The following is a 448-amino-acid chain: C4-dicarboxylate transport protein 2 (448 aa).

9 consecutive transmembrane segments (helical) span residues 13 to 33 (SLYV…HFSP), 49 to 69 (LIKM…IAGM), 81 to 101 (LALL…LIVV), 149 to 169 (AFAK…GFAL), 193 to 213 (IVGI…AFTI), 227 to 247 (LMGA…GIVS), 294 to 314 (VVGL…SIYL), 335 to 355 (ITLL…TGSG), and 357 to 377 (IVLA…LALI).

Belongs to the dicarboxylate/amino acid:cation symporter (DAACS) (TC 2.A.23) family.

Its subcellular location is the cell inner membrane. Functionally, responsible for the transport of dicarboxylates such as succinate, fumarate, and malate from the periplasm across the membrane. In Polaromonas naphthalenivorans (strain CJ2), this protein is C4-dicarboxylate transport protein 2.